Here is a 165-residue protein sequence, read N- to C-terminus: Protoporphyrinogen IX oxidase (165 aa).

Transmembrane regions (helical) follow at residues 26 to 46 (LHVI…RLFV), 77 to 97 (AMIA…IVDW), 99 to 119 (MLWP…HMWL), and 145 to 165 (PTLL…YWGF). Histidine 27 is a binding site for heme. Lysine 105 contacts heme.

Belongs to the HemJ family. Homodimer. Requires heme b as cofactor.

The protein localises to the cell membrane. The enzyme catalyses protoporphyrinogen IX + 3 A = protoporphyrin IX + 3 AH2. It participates in porphyrin-containing compound metabolism; protoporphyrin-IX biosynthesis; protoporphyrin-IX from protoporphyrinogen-IX: step 1/1. Functionally, catalyzes the oxidation of protoporphyrinogen IX to protoporphyrin IX. Is involved in the biosynthesis of tetrapyrrole molecules like heme and chlorophyll. Does not use oxygen or artificial electron acceptors such as menadione or benzoquinone. This chain is Protoporphyrinogen IX oxidase, found in Cereibacter sphaeroides (strain ATCC 17023 / DSM 158 / JCM 6121 / CCUG 31486 / LMG 2827 / NBRC 12203 / NCIMB 8253 / ATH 2.4.1.) (Rhodobacter sphaeroides).